A 481-amino-acid polypeptide reads, in one-letter code: Aspartyl/glutamyl-tRNA(Asn/Gln) amidotransferase subunit B (481 aa).

It belongs to the GatB/GatE family. GatB subfamily. Heterotrimer of A, B and C subunits.

It catalyses the reaction L-glutamyl-tRNA(Gln) + L-glutamine + ATP + H2O = L-glutaminyl-tRNA(Gln) + L-glutamate + ADP + phosphate + H(+). The catalysed reaction is L-aspartyl-tRNA(Asn) + L-glutamine + ATP + H2O = L-asparaginyl-tRNA(Asn) + L-glutamate + ADP + phosphate + 2 H(+). Functionally, allows the formation of correctly charged Asn-tRNA(Asn) or Gln-tRNA(Gln) through the transamidation of misacylated Asp-tRNA(Asn) or Glu-tRNA(Gln) in organisms which lack either or both of asparaginyl-tRNA or glutaminyl-tRNA synthetases. The reaction takes place in the presence of glutamine and ATP through an activated phospho-Asp-tRNA(Asn) or phospho-Glu-tRNA(Gln). This Cellvibrio japonicus (strain Ueda107) (Pseudomonas fluorescens subsp. cellulosa) protein is Aspartyl/glutamyl-tRNA(Asn/Gln) amidotransferase subunit B.